The primary structure comprises 175 residues: ATP-dependent protease subunit HslV (175 aa).

The active site involves threonine 2. Na(+) is bound by residues alanine 156, cysteine 159, and threonine 162.

Belongs to the peptidase T1B family. HslV subfamily. As to quaternary structure, a double ring-shaped homohexamer of HslV is capped on each side by a ring-shaped HslU homohexamer. The assembly of the HslU/HslV complex is dependent on binding of ATP.

The protein resides in the cytoplasm. The catalysed reaction is ATP-dependent cleavage of peptide bonds with broad specificity.. Its activity is regulated as follows. Allosterically activated by HslU binding. Protease subunit of a proteasome-like degradation complex believed to be a general protein degrading machinery. The sequence is that of ATP-dependent protease subunit HslV from Rhizobium etli (strain ATCC 51251 / DSM 11541 / JCM 21823 / NBRC 15573 / CFN 42).